The sequence spans 164 residues: ATP synthase subunit b 1 (164 aa).

A helical transmembrane segment spans residues proline 8 to valine 28.

This sequence belongs to the ATPase B chain family. F-type ATPases have 2 components, F(1) - the catalytic core - and F(0) - the membrane proton channel. F(1) has five subunits: alpha(3), beta(3), gamma(1), delta(1), epsilon(1). F(0) has three main subunits: a(1), b(2) and c(10-14). The alpha and beta chains form an alternating ring which encloses part of the gamma chain. F(1) is attached to F(0) by a central stalk formed by the gamma and epsilon chains, while a peripheral stalk is formed by the delta and b chains.

The protein resides in the cell inner membrane. In terms of biological role, f(1)F(0) ATP synthase produces ATP from ADP in the presence of a proton or sodium gradient. F-type ATPases consist of two structural domains, F(1) containing the extramembraneous catalytic core and F(0) containing the membrane proton channel, linked together by a central stalk and a peripheral stalk. During catalysis, ATP synthesis in the catalytic domain of F(1) is coupled via a rotary mechanism of the central stalk subunits to proton translocation. Functionally, component of the F(0) channel, it forms part of the peripheral stalk, linking F(1) to F(0). In Bradyrhizobium sp. (strain ORS 278), this protein is ATP synthase subunit b 1.